The following is a 1027-amino-acid chain: MRAALWTLGLGPLLLNLWAVPIGGPGALRLAYRHSTCDGVVLVRHHGAWGYVCNQEWTLAEASVVCRQLGCGPAVGAPKYVPLPGEMAQPWLHNVSCRGNESSLWECSLGSWCQSPCPHAWVVVALCSNGTFRELRLVKGRSPCAGLPEIRNVNGVDRLCVLHVEEAMVFCRELGCGPVLQAPRRDVGVVRKYLACRGTEPTIRSCRLDNNFRSGCDLRLDAEVVCSGHTEARLVGGEHPCAGRLEVTWGTVCDAALDLATAHVVCRELQCGAVVSTPEGARFGRGSGPVWTEAFRCAGNESLLFHCPRGRGSQCGHGHDAGLRCSEFRMVNGSSSCEGRVEFQVQGSWAPLCATHWDIADATVLCHQLNCGNAVAAPGGGHFGDGDAAIWPDAFHCEGTESYLWNCPVSTLGAPACAPGNTASAVCSGLAHALRLREGQSRCDGRVEVSLDGVWGRVLDDAWDLRGAGVVCRQLGCRGAQQAYDAPAPSRGSVQVALSRVRCLGTETRLTQCNVSATLQEPAGTSRDAGVVCSGEVGTASPMARRHGIPGALTLSLHREPQGAAGRGAGALHGGAWGTVCDDAWDLRDAHVVCRQLGCGRALSALGAAHFGAGAGRIWLDELGCQGHESALWQCPSAGWGRHDWRHKEDAGVFCSESVALRLRGGTCCCAGWLDVFYNGTWGAMCSNALKDLSLSIICKQLGCGVWGVGLAGEQALPLCGHRDRLGGQHRVPQAAQLHSVAMPFPPMAPALLRPSRAGLSEDRPQAAGEPLNCSSWLGCPEEGALRVRGGEDRCSGRVELWHAGSWGTVCDDGWDLADAEVVCRQLGCGRAVAALGAAAFGPGSGPVWLDEVGCRGSEASLWGCPAERWGRGDRAHEEDAGVRCWEPGPGPPLPAAPFRTFWVVSVVLGSLLGLLLLGLMAFLILPRVTQAMQRGLGRSEVSPGEAIYDVIGEMPPAGLYEEIMEAEAVLQDEEDGSVVKVDTEAAVSGEVSNLLEGQSIRAEGGHSRPVSQGYDEAAFPLEEMTL.

A signal peptide spans 1–19 (MRAALWTLGLGPLLLNLWA). At 20-906 (VPIGGPGALR…APFRTFWVVS (887 aa)) the chain is on the extracellular side. Residues 28–128 (LRLAYRHSTC…HAWVVVALCS (101 aa)) form the SRCR 1 domain. 3 disulfides stabilise this stretch: cysteine 53–cysteine 117, cysteine 66–cysteine 127, and cysteine 97–cysteine 107. N-linked (GlcNAc...) asparagine glycosylation occurs at asparagine 94. Residue asparagine 129 is glycosylated (N-linked (GlcNAc...) asparagine). SRCR domains are found at residues 135–227 (LRLV…VVCS), 232–326 (ARLV…LRCS), 328–428 (FRMV…AVCS), 434–534 (LRLR…VVCS), 555–656 (LSLH…VFCS), 661–761 (LRLR…AGLS), and 786–886 (LRVR…VRCW). Cystine bridges form between cysteine 160/cysteine 216, cysteine 171/cysteine 226, cysteine 196/cysteine 206, cysteine 253/cysteine 315, cysteine 266/cysteine 325, and cysteine 297/cysteine 307. Asparagine 332 carries N-linked (GlcNAc...) asparagine glycosylation. 7 disulfides stabilise this stretch: cysteine 353/cysteine 417, cysteine 366/cysteine 427, cysteine 397/cysteine 407, cysteine 472/cysteine 533, cysteine 503/cysteine 513, cysteine 594/cysteine 655, and cysteine 625/cysteine 635. Disulfide bonds link cysteine 824/cysteine 885 and cysteine 855/cysteine 865. The chain crosses the membrane as a helical span at residues 907–927 (VVLGSLLGLLLLGLMAFLILP). Over 928–1027 (RVTQAMQRGL…AAFPLEEMTL (100 aa)) the chain is Cytoplasmic.

In terms of tissue distribution, mainly expressed by CD4(+) and CD8(+) T lymphocytes. Also highly expressed in small intestine and colon. Expressed (at protein level) in small intestine, stomach, gall bladder, and placental villi.

The protein localises to the membrane. In terms of biological role, may play a role in the immune system, perhaps as a co-receptor on alphabeta and gammadelta T-cells. The polypeptide is Scavenger receptor cysteine-rich domain-containing protein SCART1 (Homo sapiens (Human)).